Here is a 207-residue protein sequence, read N- to C-terminus: Outer-membrane lipoprotein LolB (207 aa).

Positions 1–21 are cleaved as a signal peptide; it reads MPMRKRHFYRLLPLASLLLAA. A lipid anchor (N-palmitoyl cysteine) is attached at cysteine 22. Cysteine 22 is lipidated: S-diacylglycerol cysteine.

Belongs to the LolB family. In terms of assembly, monomer.

The protein resides in the cell outer membrane. Its function is as follows. Plays a critical role in the incorporation of lipoproteins in the outer membrane after they are released by the LolA protein. In Yersinia pestis bv. Antiqua (strain Antiqua), this protein is Outer-membrane lipoprotein LolB.